Consider the following 198-residue polypeptide: Putative pseudouridine methyltransferase (198 aa).

Residues Met-132 and Cys-186 each coordinate S-adenosyl-L-methionine.

The protein belongs to the methyltransferase superfamily. TrmY family.

The protein localises to the cytoplasm. This Shewanella baltica (strain OS185) protein is Putative pseudouridine methyltransferase.